The primary structure comprises 445 residues: Questin oxidase (445 aa).

Belongs to the questin oxidase family. It depends on NADPH as a cofactor. In terms of tissue distribution, specifically expressed in conidia.

It functions in the pathway secondary metabolite biosynthesis. Functionally, questin oxidase; part of the gene cluster that mediates the biosynthesis of trypacidin, a mycotoxin with antiprotozoal activity and that plays a role in the infection process. The pathway begins with the synthesis of atrochrysone thioester by the polyketide synthase (PKS) tpcC. The atrochrysone carboxyl ACP thioesterase tpcB then breaks the thioester bond and releases the atrochrysone carboxylic acid from tpcC. The decarboxylase tpcK converts atrochrysone carboxylic acid to atrochrysone which is further reduced into emodin anthrone. The next step is performed by the emodin anthrone oxygenase tpcL that catalyzes the oxidation of emodinanthrone to emodin. Emodin O-methyltransferase encoded by tpcA catalyzes methylation of the 8-hydroxy group of emodin to form questin. Ring cleavage of questin by questin oxidase tpcI leads to desmethylsulochrin via several intermediates including questin epoxide. Another methylation step catalyzed by tpcM leads to the formation of sulochrin which is further converted to monomethylsulfochrin by tpcH. Finally, the tpcJ catalyzes the conversion of monomethylsulfochrin to trypacidin. Trypacidin is toxic for human pulmonary and bronchial epithelial cells by initiating the intracellular formation of nitric oxide (NO) and hydrogen peroxide (H(2)O(2)), thus triggering host necrotic cell death. The trypacidin pathway is also able to produce endocrocin via a distinct route from the endocrocin Enc pathway. This Aspergillus fumigatus (strain ATCC MYA-4609 / CBS 101355 / FGSC A1100 / Af293) (Neosartorya fumigata) protein is Questin oxidase.